A 252-amino-acid chain; its full sequence is Probable transcriptional regulatory protein Cagg_2594 (252 aa).

Positions 1-14 (MSGHSKWHTIRRAK) are enriched in basic residues. Residues 1–22 (MSGHSKWHTIRRAKSANDQRRG) form a disordered region.

It belongs to the TACO1 family.

It is found in the cytoplasm. The protein is Probable transcriptional regulatory protein Cagg_2594 of Chloroflexus aggregans (strain MD-66 / DSM 9485).